The chain runs to 814 residues: Acyl-coenzyme A dehydrogenase (814 aa).

Glu-497 functions as the Proton acceptor in the catalytic mechanism.

Belongs to the acyl-CoA dehydrogenase family. The cofactor is FAD.

It carries out the reaction a medium-chain 2,3-saturated fatty acyl-CoA + oxidized [electron-transfer flavoprotein] + H(+) = a medium-chain (2E)-enoyl-CoA + reduced [electron-transfer flavoprotein]. It catalyses the reaction a long-chain 2,3-saturated fatty acyl-CoA + oxidized [electron-transfer flavoprotein] + H(+) = a long-chain (2E)-enoyl-CoA + reduced [electron-transfer flavoprotein]. It participates in lipid metabolism; fatty acid beta-oxidation. Functionally, catalyzes the dehydrogenation of acyl-coenzymes A (acyl-CoAs) to 2-enoyl-CoAs, the first step of the beta-oxidation cycle of fatty acid degradation. Is required for the utilization of medium- and long-chain fatty acids as sole carbon sources for growth. This Escherichia coli O157:H7 protein is Acyl-coenzyme A dehydrogenase (fadE).